Consider the following 263-residue polypeptide: Receptor expression-enhancing protein 3-A (263 aa).

Transmembrane regions (helical) follow at residues 2–22 (VSWI…PAYF) and 35–55 (YVRW…EAIA). 2 disordered regions span residues 161–228 (GDET…SMRS) and 240–263 (YASL…AHHL). A compositionally biased stretch (acidic residues) spans 199 to 214 (DDNTDEDVEVNSEDEV). Positions 242–251 (SLKHKPKKRP) are enriched in basic residues.

Belongs to the DP1 family.

The protein resides in the endoplasmic reticulum membrane. Functionally, microtubule-binding protein required to ensure proper cell division and nuclear envelope reassembly by sequestering the endoplasmic reticulum away from chromosomes during mitosis. Probably acts by clearing the endoplasmic reticulum membrane from metaphase chromosomes. The protein is Receptor expression-enhancing protein 3-A (reep3-a) of Xenopus laevis (African clawed frog).